A 484-amino-acid chain; its full sequence is Glutamyl-tRNA(Gln) amidotransferase subunit A (484 aa).

Active-site charge relay system residues include Lys77 and Ser152. The active-site Acyl-ester intermediate is the Ser176.

Belongs to the amidase family. GatA subfamily. In terms of assembly, heterotrimer of A, B and C subunits.

The catalysed reaction is L-glutamyl-tRNA(Gln) + L-glutamine + ATP + H2O = L-glutaminyl-tRNA(Gln) + L-glutamate + ADP + phosphate + H(+). Allows the formation of correctly charged Gln-tRNA(Gln) through the transamidation of misacylated Glu-tRNA(Gln) in organisms which lack glutaminyl-tRNA synthetase. The reaction takes place in the presence of glutamine and ATP through an activated gamma-phospho-Glu-tRNA(Gln). In Pseudomonas aeruginosa (strain LESB58), this protein is Glutamyl-tRNA(Gln) amidotransferase subunit A.